A 151-amino-acid polypeptide reads, in one-letter code: Cytochrome c-type biogenesis protein CcmE (151 aa).

Residues 1–8 are Cytoplasmic-facing; the sequence is MNPLRRKR. The helical; Signal-anchor for type II membrane protein transmembrane segment at 9–29 threads the bilayer; that stretch reads LLIILAILVGVGVAVGLALSA. The Periplasmic portion of the chain corresponds to 30-151; the sequence is LQQNINLFYT…QSAPTPAKEG (122 aa). Heme contacts are provided by His124 and Tyr128.

It belongs to the CcmE/CycJ family.

The protein resides in the cell inner membrane. In terms of biological role, heme chaperone required for the biogenesis of c-type cytochromes. Transiently binds heme delivered by CcmC and transfers the heme to apo-cytochromes in a process facilitated by CcmF and CcmH. This chain is Cytochrome c-type biogenesis protein CcmE, found in Pseudomonas fluorescens biotype C.